The sequence spans 368 residues: Isopentenyl-diphosphate delta-isomerase (368 aa).

Position 7–8 (7–8 (RK)) interacts with substrate. Residues threonine 65, 66–68 (GMT), serine 96, and asparagine 125 contribute to the FMN site. A substrate-binding site is contributed by 96–98 (SQR). Residue glutamine 160 coordinates substrate. Mg(2+) is bound at residue glutamate 161. Residues lysine 193, serine 218, threonine 223, 275-277 (GIR), and 296-297 (AL) each bind FMN.

It belongs to the IPP isomerase type 2 family. As to quaternary structure, homooctamer. Dimer of tetramers. Requires FMN as cofactor. The cofactor is NADPH. Mg(2+) serves as cofactor.

Its subcellular location is the cytoplasm. The catalysed reaction is isopentenyl diphosphate = dimethylallyl diphosphate. Its function is as follows. Involved in the biosynthesis of isoprenoids. Catalyzes the 1,3-allylic rearrangement of the homoallylic substrate isopentenyl (IPP) to its allylic isomer, dimethylallyl diphosphate (DMAPP). The chain is Isopentenyl-diphosphate delta-isomerase from Saccharolobus islandicus (strain M.16.27) (Sulfolobus islandicus).